Reading from the N-terminus, the 631-residue chain is Quinoprotein alcohol dehydrogenase PedE (631 aa).

The signal sequence occupies residues 1 to 33 (MTIRSLPALSPLALSVRVLLMAGSLALGNVATA). Asp53, Thr56, and Asp59 together coordinate Ca(2+). Residue Glu103 participates in pyrroloquinoline quinone binding. Cys147 and Cys148 are oxidised to a cystine. Pyrroloquinoline quinone-binding positions include Arg153, Thr197, and 215 to 217 (HGS). Glu221 is a binding site for Ca(2+). A disordered region spans residues 250 to 286 (GRLNGKDSTPTGDVKAPSWPDDPTTETGKVEAWSHGG). Asn308 and Asp358 together coordinate Ca(2+). Catalysis depends on Asp358, which acts as the Proton acceptor. Residue Arg386 coordinates pyrroloquinoline quinone. The disordered stretch occupies residues 421-443 (GRPVENPGQRPAKPLPGETKGKP). Residues Trp531 and Ala595 each coordinate pyrroloquinoline quinone.

Belongs to the bacterial PQQ dehydrogenase family. As to quaternary structure, homodimer. Interacts with cytochrome c550. Requires pyrroloquinoline quinone as cofactor. The cofactor is Ca(2+). In terms of processing, the disulfide ring formed between the two adjacent cysteine residues Cys-147 and Cys-148 is essential for efficient electron transfer at pH 7 from PedE to its natural electron acceptor cytochrome c550.

The protein resides in the periplasm. It carries out the reaction a primary alcohol + 2 Fe(III)-[cytochrome c] = an aldehyde + 2 Fe(II)-[cytochrome c] + 2 H(+). The enzyme catalyses ethanol + 2 Fe(III)-[cytochrome c] = acetaldehyde + 2 Fe(II)-[cytochrome c] + 2 H(+). It catalyses the reaction butan-1-ol + 2 Fe(III)-[cytochrome c] = butanal + 2 Fe(II)-[cytochrome c] + 2 H(+). The catalysed reaction is butan-2-ol + 2 Fe(III)-[cytochrome c] = butan-2-one + 2 Fe(II)-[cytochrome c] + 2 H(+). It carries out the reaction 2-phenylethanol + 2 Fe(III)-[cytochrome c] = 2-phenylacetaldehyde + 2 Fe(II)-[cytochrome c] + 2 H(+). The enzyme catalyses octan-1-ol + 2 Fe(III)-[cytochrome c] = octanal + 2 Fe(II)-[cytochrome c] + 2 H(+). It catalyses the reaction hexan-1-ol + 2 Fe(III)-[cytochrome c] = hexanal + 2 Fe(II)-[cytochrome c] + 2 H(+). The catalysed reaction is cinnamyl alcohol + 2 Fe(III)-[cytochrome c] = cinnamaldehyde + 2 Fe(II)-[cytochrome c] + 2 H(+). It carries out the reaction farnesol + 2 Fe(III)-[cytochrome c] = farnesal + 2 Fe(II)-[cytochrome c] + 2 H(+). The enzyme catalyses an aldehyde + 2 Fe(III)-[cytochrome c] + H2O = a carboxylate + 2 Fe(II)-[cytochrome c] + 3 H(+). It catalyses the reaction acetaldehyde + 2 Fe(III)-[cytochrome c] + H2O = 2 Fe(II)-[cytochrome c] + acetate + 3 H(+). The catalysed reaction is butanal + 2 Fe(III)-[cytochrome c] + H2O = butanoate + 2 Fe(II)-[cytochrome c] + 3 H(+). It carries out the reaction hexanal + 2 Fe(III)-[cytochrome c] + H2O = hexanoate + 2 Fe(II)-[cytochrome c] + 3 H(+). The enzyme catalyses octanal + 2 Fe(III)-[cytochrome c] + H2O = octanoate + 2 Fe(II)-[cytochrome c] + 3 H(+). In terms of biological role, alcohol dehydrogenase that catalyzes the oxidation of a range of substrates, including linear and aromatic primary and secondary alcohols, as well as aldehydes, allowing bacterial growth with a variety of volatile organic compounds (VOCs) as carbon and energy sources. Uses a specific inducible cytochrome c550, encoded by the adjacent gene in the locus, as electron acceptor. This Pseudomonas putida (strain ATCC 47054 / DSM 6125 / CFBP 8728 / NCIMB 11950 / KT2440) protein is Quinoprotein alcohol dehydrogenase PedE.